Here is a 174-residue protein sequence, read N- to C-terminus: MESKKIAITELLNPSNQENLKEKLQEINKQLISLCSSLPKRNWVPAPSSDILRSLSRTKLDSQEIRLIKTTYRLSTLLSKLQEKDIVFNVVTKDHLLKNGTPYNPYPQPYRGHRFTKENVHTLEAWYSNHIDNPYLDPKSLQSLAQKTNLSKIQIKNWVSNRRRKQKHPPFLLI.

A DNA-binding region (homeobox; TALE-type) is located at residues 108-170; that stretch reads QPYRGHRFTK…NRRRKQKHPP (63 aa).

It belongs to the TALE/M-ATYP homeobox family. In terms of assembly, forms a heterodimer with A1.

The protein resides in the nucleus. Mating type proteins are sequence specific DNA-binding proteins that act as master switches in yeast differentiation by controlling gene expression in a cell type-specific fashion. Transcriptional corepressor that acts in conjunction with A1 to repress transcription of haploid-specific genes and of MATALPHA1. The sequence is that of Mating-type protein ALPHA2 (MATALPHA2) from Nakaseomyces delphensis (Yeast).